Consider the following 212-residue polypeptide: MKPLTTVDGLVLPLDRSNVDTDAIIPKQYLKSVKRTGFGPNLFDDWRYLEPGEPGMDHSARKPNPDFVLNAPRYQGAEILLARKNFGCGSSREHAVWALTDYGIRVVIAPSFADIFFGNSFKNGLLPIVLDEAVVDRLFQEVEATEGYRLKVDLAEQTVTTPSGEAFPFEVGEFHKYCLLNGLDDIGLTLQHADEIRAYEQRRRAEAPWLFR.

The protein belongs to the LeuD family. LeuD type 1 subfamily. In terms of assembly, heterodimer of LeuC and LeuD.

The catalysed reaction is (2R,3S)-3-isopropylmalate = (2S)-2-isopropylmalate. It functions in the pathway amino-acid biosynthesis; L-leucine biosynthesis; L-leucine from 3-methyl-2-oxobutanoate: step 2/4. Functionally, catalyzes the isomerization between 2-isopropylmalate and 3-isopropylmalate, via the formation of 2-isopropylmaleate. The polypeptide is 3-isopropylmalate dehydratase small subunit (Thioalkalivibrio sulfidiphilus (strain HL-EbGR7)).